Consider the following 287-residue polypeptide: ATP synthase gamma chain (287 aa).

This sequence belongs to the ATPase gamma chain family. As to quaternary structure, F-type ATPases have 2 components, CF(1) - the catalytic core - and CF(0) - the membrane proton channel. CF(1) has five subunits: alpha(3), beta(3), gamma(1), delta(1), epsilon(1). CF(0) has three main subunits: a, b and c.

The protein resides in the cell membrane. Functionally, produces ATP from ADP in the presence of a proton gradient across the membrane. The gamma chain is believed to be important in regulating ATPase activity and the flow of protons through the CF(0) complex. This Bacillus caldotenax protein is ATP synthase gamma chain.